The sequence spans 214 residues: Probable nicotinate-nucleotide adenylyltransferase (214 aa).

The protein belongs to the NadD family.

It carries out the reaction nicotinate beta-D-ribonucleotide + ATP + H(+) = deamido-NAD(+) + diphosphate. Its pathway is cofactor biosynthesis; NAD(+) biosynthesis; deamido-NAD(+) from nicotinate D-ribonucleotide: step 1/1. Functionally, catalyzes the reversible adenylation of nicotinate mononucleotide (NaMN) to nicotinic acid adenine dinucleotide (NaAD). This chain is Probable nicotinate-nucleotide adenylyltransferase, found in Rubrobacter xylanophilus (strain DSM 9941 / JCM 11954 / NBRC 16129 / PRD-1).